Here is a 95-residue protein sequence, read N- to C-terminus: Large ribosomal subunit protein bL25 (95 aa).

This sequence belongs to the bacterial ribosomal protein bL25 family. In terms of assembly, part of the 50S ribosomal subunit; part of the 5S rRNA/L5/L18/L25 subcomplex. Contacts the 5S rRNA. Binds to the 5S rRNA independently of L5 and L18.

Functionally, this is one of the proteins that binds to the 5S RNA in the ribosome where it forms part of the central protuberance. In Shewanella piezotolerans (strain WP3 / JCM 13877), this protein is Large ribosomal subunit protein bL25.